Reading from the N-terminus, the 463-residue chain is Glutamate--tRNA ligase (463 aa).

The short motif at 8–18 is the 'HIGH' region element; that stretch reads PSPTGYLHIGG. The 'KMSKS' region signature appears at 236–240; the sequence is RLSKR. K239 provides a ligand contact to ATP.

It belongs to the class-I aminoacyl-tRNA synthetase family. Glutamate--tRNA ligase type 1 subfamily. Monomer.

It is found in the cytoplasm. The catalysed reaction is tRNA(Glu) + L-glutamate + ATP = L-glutamyl-tRNA(Glu) + AMP + diphosphate. In terms of biological role, catalyzes the attachment of glutamate to tRNA(Glu) in a two-step reaction: glutamate is first activated by ATP to form Glu-AMP and then transferred to the acceptor end of tRNA(Glu). This Nitrosomonas europaea (strain ATCC 19718 / CIP 103999 / KCTC 2705 / NBRC 14298) protein is Glutamate--tRNA ligase.